The primary structure comprises 363 residues: Putative transcriptional activator MSA2 (363 aa).

The interval 1–20 (MVYTTPQQQQRFSSTPQSSH) is disordered. Residues Ser157 and Ser292 each carry the phosphoserine modification.

Interacts with transcription complexes SCB-binding factor (SBF) and MCB-binding factor (MBF). Interacts with SWI4.

This chain is Putative transcriptional activator MSA2 (MSA2), found in Saccharomyces cerevisiae (strain ATCC 204508 / S288c) (Baker's yeast).